The chain runs to 63 residues: Large ribosomal subunit protein uL29 (63 aa).

Belongs to the universal ribosomal protein uL29 family.

This Chromohalobacter salexigens (strain ATCC BAA-138 / DSM 3043 / CIP 106854 / NCIMB 13768 / 1H11) protein is Large ribosomal subunit protein uL29.